Here is a 169-residue protein sequence, read N- to C-terminus: Procalin (169 aa).

The first 18 residues, 1–18, serve as a signal peptide directing secretion; the sequence is MKTFIVITFIGILSYAYA. 3 cysteine pairs are disulfide-bonded: Cys21/Cys125, Cys54/Cys168, and Cys83/Cys97.

Belongs to the calycin superfamily. Triabin family. In terms of tissue distribution, expressed in salivary glands.

It is found in the secreted. This Hospesneotomae protracta (Western bloodsucking conenose) protein is Procalin.